The following is a 549-amino-acid chain: Tight junction-associated protein 1 (549 aa).

The segment at 1-34 (MSSAAPAKKPYRKAPPEHRELRLEIPVSRLEQEE) is disordered. Residues 14-23 (APPEHRELRL) show a composition bias toward basic and acidic residues. A coiled-coil region spans residues 42 to 171 (MKLLQQENEE…EELNERYRLD (130 aa)). Disordered regions lie at residues 207–226 (RSGQ…LSPG) and 266–322 (VDMS…PLYP). Ser-295 is modified (phosphoserine). Over residues 311 to 320 (YPTPSPPHPL) the composition is skewed to pro residues. Thr-313 bears the Phosphothreonine mark. Residues Ser-315 and Ser-340 each carry the phosphoserine modification. Disordered stretches follow at residues 359 to 404 (EDGS…SEED), 410 to 429 (QRAF…RTAF), and 434 to 549 (LPEL…TVLS). A compositionally biased stretch (polar residues) spans 369 to 383 (SVPSSPASAQGSPHH). Over residues 389 to 400 (PSALSAPASSAS) the composition is skewed to low complexity. Phosphothreonine is present on Thr-417. Ser-483 bears the Phosphoserine mark. The segment covering 485 to 498 (EEERQSLLPDKEGT) has biased composition (basic and acidic residues). The span at 522–534 (RSPKRMGVHHLHR) shows a compositional bias: basic residues. Ser-537 carries the post-translational modification Phosphoserine. Positions 538–549 (LTQAQEQGTVLS) are enriched in polar residues.

As to quaternary structure, interacts with DLG1. Interacts with ARF6 (GTP-bound form). In terms of tissue distribution, widely expressed including in adult thymus, heart, lung, liver, small intestine, kidney, spleen, testis and skeletal muscle and in embryonic brain but not detected in adult brain (at protein level).

The protein resides in the golgi apparatus. Its subcellular location is the trans-Golgi network. The protein localises to the cell junction. It localises to the tight junction. It is found in the cell membrane. Its function is as follows. Plays a role in regulating the structure of the Golgi apparatus. This chain is Tight junction-associated protein 1, found in Mus musculus (Mouse).